The following is a 50-amino-acid chain: Inter-alpha-trypsin inhibitor heavy chain H2 (50 aa).

The protein belongs to the ITIH family. In terms of assembly, I-alpha-I plasma protease inhibitors are assembled from one or two heavy chains (HC) and one light chain, bikunin. Inter-alpha-inhibitor (I-alpha-I) is composed of ITIH1/HC1, ITIH2/HC2 and bikunin. Post-translationally, phosphorylated by FAM20C in the extracellular medium.

It localises to the secreted. In terms of biological role, may act as a carrier of hyaluronan in serum or as a binding protein between hyaluronan and other matrix protein, including those on cell surfaces in tissues to regulate the localization, synthesis and degradation of hyaluronan which are essential to cells undergoing biological processes. This is Inter-alpha-trypsin inhibitor heavy chain H2 (ITIH2) from Bos taurus (Bovine).